Reading from the N-terminus, the 443-residue chain is Thymidine phosphorylase (443 aa).

Belongs to the thymidine/pyrimidine-nucleoside phosphorylase family. Homodimer.

It carries out the reaction thymidine + phosphate = 2-deoxy-alpha-D-ribose 1-phosphate + thymine. It functions in the pathway pyrimidine metabolism; dTMP biosynthesis via salvage pathway; dTMP from thymine: step 1/2. The enzymes which catalyze the reversible phosphorolysis of pyrimidine nucleosides are involved in the degradation of these compounds and in their utilization as carbon and energy sources, or in the rescue of pyrimidine bases for nucleotide synthesis. The chain is Thymidine phosphorylase from Shewanella baltica (strain OS223).